Consider the following 435-residue polypeptide: Histidinol dehydrogenase (435 aa).

3 residues coordinate NAD(+): Y131, Q189, and N212. S238, Q260, and H263 together coordinate substrate. Residues Q260 and H263 each contribute to the Zn(2+) site. Active-site proton acceptor residues include E327 and H328. 4 residues coordinate substrate: H328, D361, E415, and H420. Residue D361 participates in Zn(2+) binding. Zn(2+) is bound at residue H420.

It belongs to the histidinol dehydrogenase family. In terms of assembly, homodimer. It depends on Zn(2+) as a cofactor.

It catalyses the reaction L-histidinol + 2 NAD(+) + H2O = L-histidine + 2 NADH + 3 H(+). It functions in the pathway amino-acid biosynthesis; L-histidine biosynthesis; L-histidine from 5-phospho-alpha-D-ribose 1-diphosphate: step 9/9. Functionally, catalyzes the sequential NAD-dependent oxidations of L-histidinol to L-histidinaldehyde and then to L-histidine. This chain is Histidinol dehydrogenase, found in Buchnera aphidicola subsp. Baizongia pistaciae (strain Bp).